The sequence spans 253 residues: tRNA uridine(34) hydroxylase (253 aa).

Residues 127–221 (HGRPLVLLDT…YFEDVGGEGY (95 aa)) form the Rhodanese domain. The active-site Cysteine persulfide intermediate is the C181.

This sequence belongs to the TrhO family.

It carries out the reaction uridine(34) in tRNA + AH2 + O2 = 5-hydroxyuridine(34) in tRNA + A + H2O. Functionally, catalyzes oxygen-dependent 5-hydroxyuridine (ho5U) modification at position 34 in tRNAs. In Xanthomonas campestris pv. campestris (strain 8004), this protein is tRNA uridine(34) hydroxylase.